A 609-amino-acid chain; its full sequence is Membrane protein insertase YidC (609 aa).

Transmembrane regions (helical) follow at residues 8-28 (LILATALSFLVILVWFILFPP), 381-401 (MGWSIIGLTLIIKAIVFPLAL), 451-471 (LPILLQIPIFFSLYKVIFVTI), 509-529 (SLTATILIGILPLLLGISMWL), and 545-565 (IFAWMPWVFMFMLGSFASGLV).

The protein belongs to the OXA1/ALB3/YidC family. Type 1 subfamily. In terms of assembly, interacts with the Sec translocase complex via SecD. Specifically interacts with transmembrane segments of nascent integral membrane proteins during membrane integration.

It is found in the cell inner membrane. Required for the insertion and/or proper folding and/or complex formation of integral membrane proteins into the membrane. Involved in integration of membrane proteins that insert both dependently and independently of the Sec translocase complex, as well as at least some lipoproteins. Aids folding of multispanning membrane proteins. This chain is Membrane protein insertase YidC, found in Ruegeria pomeroyi (strain ATCC 700808 / DSM 15171 / DSS-3) (Silicibacter pomeroyi).